Consider the following 257-residue polypeptide: Undecaprenyl-diphosphatase (257 aa).

The next 7 membrane-spanning stretches (helical) occupy residues 42–62, 76–96, 103–123, 136–156, 172–192, 209–229, and 237–257; these read YVLFNLICHLGTLGSILYMFL, IFHIILGTLPLFPLVLILKPI, PQYLGLCFLFSAALLFSGVYF, CLTIGLFQAVAVLPGISRSGA, IQFSFLLAIPAILGGTFLEIW, QFLTGFITSFMIGCASLWAVI, and WVYFAWYCLFIGIATTLYFQM.

Belongs to the UppP family.

It localises to the cell inner membrane. It catalyses the reaction di-trans,octa-cis-undecaprenyl diphosphate + H2O = di-trans,octa-cis-undecaprenyl phosphate + phosphate + H(+). In terms of biological role, catalyzes the dephosphorylation of undecaprenyl diphosphate (UPP). Confers resistance to bacitracin. This Protochlamydia amoebophila (strain UWE25) protein is Undecaprenyl-diphosphatase.